The following is a 250-amino-acid chain: 5-oxoprolinase subunit A (250 aa).

Belongs to the LamB/PxpA family. In terms of assembly, forms a complex composed of PxpA, PxpB and PxpC.

It carries out the reaction 5-oxo-L-proline + ATP + 2 H2O = L-glutamate + ADP + phosphate + H(+). Catalyzes the cleavage of 5-oxoproline to form L-glutamate coupled to the hydrolysis of ATP to ADP and inorganic phosphate. This Chromohalobacter salexigens (strain ATCC BAA-138 / DSM 3043 / CIP 106854 / NCIMB 13768 / 1H11) protein is 5-oxoprolinase subunit A.